The following is a 331-amino-acid chain: Thiamine thiazole synthase (331 aa).

Substrate is bound by residues Cys-86, 107 to 108 (EA), Gly-115, and Val-183. At Cys-220 the chain carries 2,3-didehydroalanine (Cys). Substrate contacts are provided by residues Asp-222, His-237, Met-289, and 299–301 (RMG).

The protein belongs to the THI4 family. In terms of assembly, homooctamer. Fe cation serves as cofactor. Post-translationally, during the catalytic reaction, a sulfide is transferred from Cys-220 to a reaction intermediate, generating a dehydroalanine residue.

It is found in the cytoplasm. The protein localises to the nucleus. It catalyses the reaction [ADP-thiazole synthase]-L-cysteine + glycine + NAD(+) = [ADP-thiazole synthase]-dehydroalanine + ADP-5-ethyl-4-methylthiazole-2-carboxylate + nicotinamide + 3 H2O + 2 H(+). Its function is as follows. Involved in biosynthesis of the thiamine precursor thiazole. Catalyzes the conversion of NAD and glycine to adenosine diphosphate 5-(2-hydroxyethyl)-4-methylthiazole-2-carboxylic acid (ADT), an adenylated thiazole intermediate. The reaction includes an iron-dependent sulfide transfer from a conserved cysteine residue of the protein to a thiazole intermediate. The enzyme can only undergo a single turnover, which suggests it is a suicide enzyme. May have additional roles in adaptation to various stress conditions and in DNA damage tolerance. This Emericella nidulans (strain FGSC A4 / ATCC 38163 / CBS 112.46 / NRRL 194 / M139) (Aspergillus nidulans) protein is Thiamine thiazole synthase.